The sequence spans 171 residues: UPF0725 protein At3g25080 (171 aa).

Belongs to the UPF0725 (EMB2204) family.

This is UPF0725 protein At3g25080 from Arabidopsis thaliana (Mouse-ear cress).